We begin with the raw amino-acid sequence, 731 residues long: Autophagy-related protein 20 (731 aa).

Residues 1–22 are compositionally biased toward polar residues; the sequence is MSSVLRNQDNPPTISEVSSTTK. Residues 1-130 form a disordered region; the sequence is MSSVLRNQDN…NNKSNNVSRV (130 aa). Basic and acidic residues predominate over residues 31–41; the sequence is KQEEKEKEKEI. Over residues 69-82 the composition is skewed to polar residues; the sequence is SFMTANSFNEGPNT. Composition is skewed to low complexity over residues 92 to 102 and 113 to 128; these read NNNSSSNNNRG and LLLYNTSNNNKSNNVS. The 177-residue stretch at 164 to 340 folds into the PX domain; it reads IQITEAGNSN…KFLDPNANWG (177 aa). Residues Arg205, Ser207, and Lys231 each contribute to the a 1,2-diacyl-sn-glycero-3-phospho-(1D-myo-inositol-3-phosphate) site. Residues 253–277 form a disordered region; it reads SVAGSNGNSGGSGGGGASGGAGSGS. Residues 259–277 show a composition bias toward gly residues; that stretch reads GNSGGSGGGGASGGAGSGS. An a 1,2-diacyl-sn-glycero-3-phospho-(1D-myo-inositol-3-phosphate)-binding site is contributed by Arg306. The interval 586-626 is disordered; sequence NSQVKPKNGKYNLEQQQSSTVSPAPPPGPPPSSSSSSSSSS. The segment covering 608–617 has biased composition (pro residues); the sequence is PAPPPGPPPS.

It belongs to the sorting nexin family.

The protein localises to the endosome membrane. It localises to the preautophagosomal structure membrane. Functionally, required for cytoplasm to vacuole transport (Cvt), pexophagy and mitophagy. Also involved in endoplasmic reticulum-specific autophagic process and is essential for the survival of cells subjected to severe ER stress. Functions in protein retrieval from the endocytic pathway. The chain is Autophagy-related protein 20 (ATG20) from Candida albicans (strain SC5314 / ATCC MYA-2876) (Yeast).